Consider the following 888-residue polypeptide: E3 ubiquitin-protein ligase SH3RF1 (888 aa).

An RING-type zinc finger spans residues 12–53 (CPVCLERLDASAKVLPCQHTFCKRCLLGIVGSRNELRCPECR). 2 SH3 domains span residues 134 to 193 (PQLP…IIKP) and 196 to 259 (QPPP…FNSA). The tract at residues 275 to 321 (DAGECSSAAAQSSTAPKHSDTKKNTKKRHSFTSLTMANKSSQASQNR) is disordered. The interaction with RAC1 stretch occupies residues 292 to 362 (HSDTKKNTKK…APSQVHISTT (71 aa)). Serine 304 bears the Phosphoserine mark. A compositionally biased stretch (polar residues) spans 305–321 (FTSLTMANKSSQASQNR). The interaction with AKT2 stretch occupies residues 440 to 543 (HLRPQTRPSV…STAGGPAQKL (104 aa)). An SH3 3 domain is found at 445–506 (TRPSVYVAIY…PGNYVAPVTR (62 aa)). 3 disordered regions span residues 516 to 549 (VPMSTAGQTSRGVTMVSPSTAGGPAQKLQGNGVA), 617 to 637 (SPASVGLPHHSLASPQPAPLM), and 693 to 741 (PDSA…ASPT). Residues 520-535 (TAGQTSRGVTMVSPST) are compositionally biased toward polar residues. Phosphoserine is present on serine 532. Polar residues predominate over residues 693–704 (PDSASLACGNSS). Over residues 707 to 718 (KPDKDSKKEKKG) the composition is skewed to basic and acidic residues. A Phosphoserine modification is found at serine 735. One can recognise an SH3 4 domain in the interval 829-888 (VVCERHRVVVSYPPQSEAELELKEGDIVFVHKKREDGWFKGTLQRNGKTGLFPGSFVENI).

The protein belongs to the SH3RF family. As to quaternary structure, interacts with HERP1. Interacts with RAC1; in a GTP-dependent manner. Interacts with MAP3K10/MLK2 and MAP3K11/MLK3. Interacts with MAPK8IP; this interaction leads to the PJAC complex (POSH-JIP or SH3RF1/MAPK8IP apoptotic complex) with a 1:1 ratio. Interacts with SIAH1. Probably part of a signaling complex that may contain SH3RF1, MAPK8IP, DLK1, MAP2K4/MKK4, MAP2K7/MKK7, MAPK8/JNK1, MAPK9/JNK2, AKT1 and AKT2. Found in a complex with RAC2, MAP3K7/TAK1, MAP2K7/MKK7, MAPK8IP1/JIP1, MAPK8/JNK1 and MAPK9/JNK2. Found in a complex with RAC1, MAP3K11/MLK3, MAP2K7/MKK7, MAPK8IP1/JIP1 and MAPK8/JNK1. Interacts with SH3RF2. Post-translationally, phosphorylated at Ser-304 by AKT1 and AKT2. When phosphorylated, it has reduced ability to bind Rac. Autoubiquitinated. Ubiquitinated by SH3RF2, leading to proteasome-mediated degradation.

Its subcellular location is the cytoplasm. The protein localises to the perinuclear region. It localises to the cell projection. The protein resides in the lamellipodium. It is found in the golgi apparatus. Its subcellular location is the trans-Golgi network. It catalyses the reaction S-ubiquitinyl-[E2 ubiquitin-conjugating enzyme]-L-cysteine + [acceptor protein]-L-lysine = [E2 ubiquitin-conjugating enzyme]-L-cysteine + N(6)-ubiquitinyl-[acceptor protein]-L-lysine.. It participates in protein modification; protein ubiquitination. Functionally, has E3 ubiquitin-protein ligase activity. In the absence of an external substrate, it can catalyze self-ubiquitination. Stimulates ubiquitination of potassium channel KCNJ1, enhancing it's dynamin-dependent and clathrin-independent endocytosis. Acts as a scaffold protein that coordinates with MAPK8IP1/JIP1 in organizing different components of the JNK pathway, including RAC1 or RAC2, MAP3K11/MLK3 or MAP3K7/TAK1, MAP2K7/MKK7, MAPK8/JNK1 and/or MAPK9/JNK2 into a functional multiprotein complex to ensure the effective activation of the JNK signaling pathway. Regulates the differentiation of CD4(+) and CD8(+) T-cells and promotes T-helper 1 (Th1) cell differentiation. Regulates the activation of MAPK8/JNK1 and MAPK9/JNK2 in CD4(+) T-cells and the activation of MAPK8/JNK1 in CD8(+) T-cells. Controls proper cortical neuronal migration and the formation of proximal cytoplasmic dilation in the leading process (PCDLP) in migratory neocortical neurons by regulating the proper localization of activated RAC1 and F-actin assembly. This is E3 ubiquitin-protein ligase SH3RF1 (SH3RF1) from Pongo abelii (Sumatran orangutan).